Consider the following 359-residue polypeptide: MNSSIVLLPGDGIGPEIVEQARLVLVKVAERFGHTFDFSSHQIGGIAIDETGDPLPQPTIDACRNAAAILLGAVGGPKWDDPSAKTRPEAGLLKIRKELGLFANLRPIKLFDELADASPLRADIVKGTDILFFRELTGGIYFGESGTSGSGEEETAFQSMTYSVGEVKRIVRMAAQAARGRSNRLTSVDKANVLEPSRLWRRVAAEVMANEFPDVQYDVVLVDSMAMHLINRPSEFDVVVTGNMFGDILTDEASMLPGSLGMLPSASLGDGGPGLYEPIHGSAPDIAGKSVANPLATILAAAMMLRHSLGLTDEAEAIEKAVAGVITDGLRTPDLARGDQSKSVSTEEMGAAVVAKLAS.

76-89 (GPKWDDPSAKTRPE) lines the NAD(+) pocket. 4 residues coordinate substrate: Arg96, Arg106, Arg134, and Asp223. Asp223, Asp247, and Asp251 together coordinate Mg(2+). 281–293 (GSAPDIAGKSVAN) contributes to the NAD(+) binding site.

This sequence belongs to the isocitrate and isopropylmalate dehydrogenases family. LeuB type 1 subfamily. As to quaternary structure, homodimer. The cofactor is Mg(2+). It depends on Mn(2+) as a cofactor.

It is found in the cytoplasm. It carries out the reaction (2R,3S)-3-isopropylmalate + NAD(+) = 4-methyl-2-oxopentanoate + CO2 + NADH. It participates in amino-acid biosynthesis; L-leucine biosynthesis; L-leucine from 3-methyl-2-oxobutanoate: step 3/4. Functionally, catalyzes the oxidation of 3-carboxy-2-hydroxy-4-methylpentanoate (3-isopropylmalate) to 3-carboxy-4-methyl-2-oxopentanoate. The product decarboxylates to 4-methyl-2 oxopentanoate. The polypeptide is 3-isopropylmalate dehydrogenase (Rhodopirellula baltica (strain DSM 10527 / NCIMB 13988 / SH1)).